A 257-amino-acid polypeptide reads, in one-letter code: 1-(5-phosphoribosyl)-5-[(5-phosphoribosylamino)methylideneamino] imidazole-4-carboxamide isomerase (257 aa).

Residue Asp-8 is the Proton acceptor of the active site. Catalysis depends on Asp-129, which acts as the Proton donor.

Belongs to the HisA/HisF family.

It localises to the cytoplasm. The enzyme catalyses 1-(5-phospho-beta-D-ribosyl)-5-[(5-phospho-beta-D-ribosylamino)methylideneamino]imidazole-4-carboxamide = 5-[(5-phospho-1-deoxy-D-ribulos-1-ylimino)methylamino]-1-(5-phospho-beta-D-ribosyl)imidazole-4-carboxamide. It functions in the pathway amino-acid biosynthesis; L-histidine biosynthesis; L-histidine from 5-phospho-alpha-D-ribose 1-diphosphate: step 4/9. The sequence is that of 1-(5-phosphoribosyl)-5-[(5-phosphoribosylamino)methylideneamino] imidazole-4-carboxamide isomerase from Nostoc punctiforme (strain ATCC 29133 / PCC 73102).